The chain runs to 145 residues: Superoxide dismutase [Cu-Zn] (145 aa).

Cu cation contacts are provided by histidine 37, histidine 39, and histidine 54. A disulfide bond links cysteine 48 and cysteine 137. Histidine 54, histidine 62, histidine 71, and aspartate 74 together coordinate Zn(2+). Histidine 111 contributes to the Cu cation binding site.

The protein belongs to the Cu-Zn superoxide dismutase family. As to quaternary structure, homodimer. Requires Cu cation as cofactor. Zn(2+) serves as cofactor.

It localises to the cytoplasm. It catalyses the reaction 2 superoxide + 2 H(+) = H2O2 + O2. Its function is as follows. Destroys radicals which are normally produced within the cells and which are toxic to biological systems. This is Superoxide dismutase [Cu-Zn] from Drosophila busckii (Fruit fly).